The sequence spans 333 residues: Adenosine deaminase (333 aa).

H12 and H14 together coordinate Zn(2+). 3 residues coordinate substrate: H14, D16, and G170. H197 lines the Zn(2+) pocket. E200 (proton donor) is an active-site residue. D278 is a binding site for Zn(2+). Residue D279 participates in substrate binding.

The protein belongs to the metallo-dependent hydrolases superfamily. Adenosine and AMP deaminases family. Adenosine deaminase subfamily. Zn(2+) serves as cofactor.

The catalysed reaction is adenosine + H2O + H(+) = inosine + NH4(+). It carries out the reaction 2'-deoxyadenosine + H2O + H(+) = 2'-deoxyinosine + NH4(+). Its function is as follows. Catalyzes the hydrolytic deamination of adenosine and 2-deoxyadenosine. The chain is Adenosine deaminase from Salmonella gallinarum (strain 287/91 / NCTC 13346).